A 911-amino-acid polypeptide reads, in one-letter code: General transcription factor 3C polypeptide 2 (911 aa).

Disordered regions lie at residues 24–187 (DSPG…RRRA) and 205–297 (ALPA…MAPN). Over residues 35 to 46 (DVKTSSEMTSAE) the composition is skewed to polar residues. Serine 63 is subject to Phosphoserine. The span at 64-81 (PDQRRLPPEQESLSRLEQ) shows a compositional bias: basic and acidic residues. A compositionally biased stretch (basic residues) spans 92–112 (SKPRASKPGRKRGGRTRKGPK). A compositionally biased stretch (pro residues) spans 114–123 (PQQPNPPSAP). Phosphoserine occurs at positions 132, 165, 167, 220, and 260. The segment covering 253 to 262 (EAEDVEESEG) has biased composition (acidic residues). Positions 263 to 277 (PSESSSEPEPVVPRS) are enriched in low complexity. 6 WD repeats span residues 366–426 (PEDG…MNET), 427–483 (HPLS…AWEL), 484–535 (PGTP…IYKV), 536–603 (QCVA…SLKL), 604–654 (YPFQ…NSIK), and 655–690 (RFLSTELAWLLPYNGVTVAQDNCYASYGLCGIHYID). Position 597 is a phosphoserine (serine 597). Positions 765 to 785 (SPEGPDHSSASSGVPNPPKAR) are disordered. 3 positions are modified to phosphoserine: serine 871, serine 892, and serine 893. Residues 889-911 (FQPSSPTRRPGFSPTSHRLLPTP) form a disordered region. Threonine 895 bears the Phosphothreonine mark. Serine 901 bears the Phosphoserine mark.

Part of the TFIIIC subcomplex TFIIIC2, consisting of six subunits, GTF3C1, GTF3C2, GTF3C3, GTF3C4, GTF3C5 and GTF3C6.

The protein localises to the nucleus. Required for RNA polymerase III-mediated transcription. Component of TFIIIC that initiates transcription complex assembly on tRNA and is required for transcription of 5S rRNA and other stable nuclear and cytoplasmic RNAs. May play a direct role in stabilizing interactions of TFIIIC2 with TFIIIC1. The polypeptide is General transcription factor 3C polypeptide 2 (GTF3C2) (Homo sapiens (Human)).